A 507-amino-acid chain; its full sequence is ATP synthase subunit alpha (507 aa).

169–176 (GDRQIGKT) contacts ATP.

It belongs to the ATPase alpha/beta chains family. F-type ATPases have 2 components, CF(1) - the catalytic core - and CF(0) - the membrane proton channel. CF(1) has five subunits: alpha(3), beta(3), gamma(1), delta(1), epsilon(1). CF(0) has three main subunits: a(1), b(2) and c(9-12). The alpha and beta chains form an alternating ring which encloses part of the gamma chain. CF(1) is attached to CF(0) by a central stalk formed by the gamma and epsilon chains, while a peripheral stalk is formed by the delta and b chains.

It is found in the cell inner membrane. It catalyses the reaction ATP + H2O + 4 H(+)(in) = ADP + phosphate + 5 H(+)(out). In terms of biological role, produces ATP from ADP in the presence of a proton gradient across the membrane. The alpha chain is a regulatory subunit. The sequence is that of ATP synthase subunit alpha from Desulfotalea psychrophila (strain LSv54 / DSM 12343).